The primary structure comprises 83 residues: Putative membrane protein insertion efficiency factor (83 aa).

The interval 63–83 (GGNDPVPDHFSLRRNKTDISD) is disordered. Basic and acidic residues predominate over residues 68 to 83 (VPDHFSLRRNKTDISD).

This sequence belongs to the UPF0161 family.

The protein localises to the cell membrane. Functionally, could be involved in insertion of integral membrane proteins into the membrane. The protein is Putative membrane protein insertion efficiency factor of Streptococcus agalactiae serotype Ia (strain ATCC 27591 / A909 / CDC SS700).